Consider the following 520-residue polypeptide: DNA-(apurinic or apyrimidinic site) endonuclease 2 (520 aa).

Residue glutamate 59 coordinates Mg(2+). Residue tyrosine 181 is part of the active site. The Mg(2+) site is built by aspartate 222, asparagine 224, and aspartate 353. The active-site Proton donor/acceptor is aspartate 222. Residues cysteine 476, histidine 478, cysteine 500, and cysteine 514 each contribute to the Zn(2+) site. The GRF-type zinc-finger motif lies at 476–520; the sequence is CRHGEESMLKTSKTSANPGRKFWICKRSRGDSNNTESSCGFFQWV.

The protein belongs to the DNA repair enzymes AP/ExoA family. Requires Mg(2+) as cofactor. The cofactor is Mn(2+).

The protein resides in the nucleus. The catalysed reaction is Exonucleolytic cleavage in the 3'- to 5'-direction to yield nucleoside 5'-phosphates.. DNA repair enzyme that cleaves apurinic/apyrimidinic (AP) sites and removes 3'-blocking groups present at single strand breaks of damaged DNA. The protein is DNA-(apurinic or apyrimidinic site) endonuclease 2 (APN2) of Saccharomyces cerevisiae (strain ATCC 204508 / S288c) (Baker's yeast).